A 134-amino-acid chain; its full sequence is Transcription factor atoh7 (134 aa).

Residues 1 to 27 (MKPRRPSCADSGSDSDSRDPEKFESAM) form a disordered region. The segment covering 15 to 27 (SDSRDPEKFESAM) has biased composition (basic and acidic residues). Positions 28–80 (RRRMAANARERKRMQGLNTAFDRLRKVVPQWGQDKKLSKYETLQMALSYIMAL) constitute a bHLH domain.

The protein resides in the nucleus. The protein localises to the perikaryon. Its subcellular location is the cell projection. It localises to the axon. Transcription factor that binds to DNA at the consensus sequence 5'-CAG[GC]TG-3'. Involved in the differentiation of retinal ganglion cells, photoreceptor population and optic nerve development. Required for retinal circadian rhythm photoentrainment. The polypeptide is Transcription factor atoh7 (Danio rerio (Zebrafish)).